Consider the following 47-residue polypeptide: Large ribosomal subunit protein bL33A (47 aa).

The protein belongs to the bacterial ribosomal protein bL33 family.

The polypeptide is Large ribosomal subunit protein bL33A (Staphylococcus aureus (strain JH1)).